The following is a 422-amino-acid chain: Histidine--tRNA ligase (422 aa).

The protein belongs to the class-II aminoacyl-tRNA synthetase family. Homodimer.

It localises to the cytoplasm. The catalysed reaction is tRNA(His) + L-histidine + ATP = L-histidyl-tRNA(His) + AMP + diphosphate + H(+). The protein is Histidine--tRNA ligase of Lysinibacillus sphaericus (strain C3-41).